A 60-amino-acid polypeptide reads, in one-letter code: Beta-toxin BotIT2 (60 aa).

Residues 1 to 60 form the LCN-type CS-alpha/beta domain; that stretch reads DGYIKGYKGCKITCVINDDYCDTECKAEGGTYGYCWKWGLACWCEDLPDEKRWKSETNTC. Disulfide bonds link Cys10/Cys60, Cys14/Cys35, Cys21/Cys42, and Cys25/Cys44.

It belongs to the long (4 C-C) scorpion toxin superfamily. Sodium channel inhibitor family. Beta subfamily. As to expression, expressed by the venom gland.

The protein resides in the secreted. Its function is as follows. Beta toxins bind voltage-independently at site-4 of sodium channels (Nav) and shift the voltage of activation toward more negative potentials thereby affecting sodium channel activation and promoting spontaneous and repetitive firing. This toxin specifically acts by inducing a new current with very slow activation/deactivation kinetics due to the transformation of normal fast channels into slow ones. It possess properties of excitatory and depressant toxins. It is highly active on insects and less active on mammals. The sequence is that of Beta-toxin BotIT2 from Buthus occitanus tunetanus (Common European scorpion).